Reading from the N-terminus, the 3175-residue chain is MATFSATGFGGSFVRDWSLDLPDACEHGAGLCCEVDGSTLCAECFRGCEGMEQCPGLFMGLLKLASPVPVGHKFLIGWYRAAKVTGRYNFLELLQHPAFAQLRVVDARLAIEEASVFISTDHASAKRFPGARFALTPVYANAWVVSPAANSLIVTTDQEQDGFCWLKLLPPDRREAGLRLYYNHYREQRTGWLSKTGLRLWLGDLGLGINASSGGLKFHIMRGSPQRAWHITTRSCKLKSYYVCDISEADWSCLPAGNYGGYNPPGDGACGYRCLAFMNGATVVSAGCSSDLWCDDELAYRVFQLSPTFTVTIPGGRVCPNAKYAMICDKQHWRVKRAKGVGLCLDESCFRGICNCQRMSGPPPAPVSAAVLDHILEAATFGNVRVVTPEGQPRPVPAPRVRPSANSSGDVKDPAPVPPVPKPRTKLATPNPTQAPIPAPRTRLQGASTQEPLASAGVASDSAPKWRVAKTVYSSAERFRTELVQRARSVGDVLVQALPLKTPAVQRYTMTLKMMRSRFSWHCDVWYPLAVIACLLPIWPSLALLLSFAIGLIPSVGNNVVLTALLVSSANYVASMDHQCEGAACLALLEEEHYYRAVRWRPITGALSLVLNLLGQVGYVARSTFDAAYVPCTVFDLCSFAILYLCRNRCWRCFGRCVRVGPATHVLGSTGQRVSKLALIDLCDHFSKPTIDVVGMATGWSGCYTGTAAMERQCASTVDPHSFDQKKAGATVYLTPPVNSGSALQCLNVMWKRPIGSTVLGEQTGAVVTAVKSISFSPPCCVSTTLPTRPGVTVVDHALYNRLTASGVDPALLRVGQGDFLKLNPGFRLIGGWIYGICYFVLVVVSTFTCLPIKCGIGTRDPFCRRVFSVPVTKTQEHCHAGMCASAEGISLDSLGLTQLQSYWIAAVTSGLVILLVCHRLAISALDLLTLASPLVLLVFPWASVGLLLACSLAGAAVKIQLLATLFVNLFFPQATLVTMGYWACVAALAVYSLMGLRVKVNVPMCVTPAHFLLLARSAGQSREQMLRVSAAAPTNSLLGVARDCYVTGTTRLYIPKEGGMVFEGLFRSPKARGNVGFVAGSSYGTGSVWTRNNEVVVLTASHVVGRANMATLKIGDAMLTLTFKKNGDFAEAVTTQSELPGNWPQLHFAQPTTGPASWCTATGDEEGLLSGEVCLAWTTSGDSGSAVVQGDAVVGVHTGSNTSGVAYVTTPSGKLLGADTVTLSSLSKHFTGPLTSIPKDIPDNIIADVDAVPRSLAMLIDGLSNRESSLSGPQLLLIACFMWSYLNQPAYLPYVLGFFAANFFLPKSVGRPVVTGLLWLCCLFTPLSMRLCLFHLVCATVTGNVISLWFYITAAGTSYLSEMWFGGYPTMLFVPRFLVYQFPGWAIGTVLAVCSITMLAAALGHTLLLDVFSASGRFDRTFMMKYFLEGGVKESVTASVTRAYGKPITQESLTATLAALTDDDFQFLSDVLDCRAVRSAMNLRAALTSFQVAQYRNILNASLQVDRDAARSRRLMAKLADFAVEQEVTAGDRVVVIDGLDRMAHFKDDLVLVPLTTKVVGGSRCTICDVVKEEANDTPVKPMPSRRRRKGLPKGAQLEWDRHQEEKRNAGDDDFAVSNDYVKRVPKYWDPSDTRGTTVKIAGTTYQKVVDYSGNVHYVEHQEDLLDYVLGKGSYEGLDQDKVLDLTNMLKVDPTELSSKDKAKARQLAHLLLDLANPVEAVNQLNLRAPHIFPGDVGRRTFADSKDKGFVALHSRTMFLAARDFLFNIKFVCDEEFTKTPKDTLLGYVRACPGYWFIFRRTHRSLIDAYWDSMECVYALPTISDFDVSPGDVAVTGERWDFESPGGGRAKRLTADLVHAFQGFHGASYSYDDKVAAAVSGDPYRSDGVLYNTRWGNIPYSVPTNALEATACYRAGCEAVTDGTNVIATIGPFPEQQPIPDIPKSVLDNCADISCDAFIAPAAETALCGDLEKYNLSTQGFVLPSVFSMVRAYLKEEIGDAPPLYLPSTVPSKNSQAGINGAEFPTKSLQSYCLIDDMVSQSMKSNLQTATMATCKRQYCSKYKIRSILGTNNYIGLGLRACLSGVTAAFQKAGKDGSPIYLGKSKFDPIPAPDKYCLETDLESCDRSTPALVRWFATNLIFELAGQPELVHSYVLNCCHDLVVAGSVAFTKRGGLSSGDPITSISNTIYSLVLYTQHMLLCGLEGYFPEIAEKYLDGSLELRDMFKYVRVYIYSDDVVLTTPNQHYAASFDRWVPHLQALLGFKVDPKKTVNTSSPSFLGCRFKQVDGKCYLASLQDRVTRSLLYHIGAKNPSEYYEAAVSIFKDSIICCDEDWWTDLHRRISGAARTDGVEFPTIEMLTSFRTKQYESAVCTVCGAAPVAKSACGGWFCGNCVPYHAGHCHTTSLFANCGHDIMYRSTYCTMCEGSPKQMVPKVPHPILDHLLCHIDYGSKEELTLVVADGRTTSPPGRYKVGHKVVAVVADVGGNIVFGCGPGSHIAVPLQDTLKGVVVNKALKNAAASEYVEGPPGSGKTFHLVKDVLAVVGSATLVVPTHASMLDCINKLKQAGADPYFVVPKYTVLDFPRPGSGNITVRLPQVGTSEGETFVDEVAYFSPVDLARILTQGRVKGYGDLNQLGCVGPASVPRNLWLRHFVSLEPLRVCHRFGAAVCDLIKGIYPYYEPAPHTTKVVFVPNPDFEKGVVITAYHKDRGLGHRTIDSIQGCTFPVVTLRLPTPQSLTRPRAVVAVTRASQELYIYDPFDQLSGLLKFTKEAEAQDLIHGPPTACHLGQEIDLWSNEGLEYYKEVNLLYTHVPIKDGVIHSYPNCGPACGWEKQSNKISCLPRVAQNLGYHYSPDLPGFCPIPKELAEHWPVVSNDRYPNCLQITLQQVCELSKPCSAGYMVGQSVFVQTPGVTSYWLTEWVDGKARALPDSLFSSGRFETNSRAFLDEAEEKFAAAHPHACLGEINKSTVGGSHFIFSQYLPPLLPADAVALVGASLAGKAAKAACSVVDVYAPSFEPYLHPETLSRVYKIMIDFKPCRLMVWRNATFYVQEGVDAVTSALAAVSKLIKVPANEPVSFHVASGYRTNALVAPQAKISIGAYAAEWALSTEPPPAGYAIVRRYIVKRLLSSTEVFLCRRGVVSSTSVQTICALEGCKPLFNFLQIGSVIGPV.

The C4-type; atypical zinc-finger motif lies at cysteine 25–cysteine 44. In terms of domain architecture, Peptidase C31 spans serine 66 to threonine 156. The 104-residue stretch at aspartate 157–glycine 260 folds into the Peptidase C32 domain. Catalysis depends on for Nsp1 papain-like cysteine proteinase activity residues cysteine 164 and histidine 230. The tract at residues glycine 261–lysine 339 is OTU-like. The Peptidase C33 domain maps to glycine 261 to serine 360. Catalysis depends on cysteine 270, which acts as the For Nsp2 cysteine proteinase activity. Cysteine 319 contacts Zn(2+). Histidine 332 functions as the For Nsp2 cysteine proteinase activity in the catalytic mechanism. The Zn(2+) site is built by cysteine 349, cysteine 354, and cysteine 356. Positions valine 386 to glutamate 451 are disordered. 7 consecutive transmembrane segments (helical) span residues alanine 530–isoleucine 550, glycine 551–asparagine 571, phenylalanine 625–leucine 645, leucine 829–threonine 849, tyrosine 903–isoleucine 923, leucine 935–glycine 955, and leucine 977–leucine 997. The HD1 stretch occupies residues alanine 530 to leucine 645. An HD2 region spans residues leucine 829–leucine 997. In terms of domain architecture, Peptidase S32 spans glycine 1065 to glutamate 1268. Residues histidine 1103, aspartate 1129, and serine 1184 each act as charge relay system; for 3C-like serine proteinase activity in the active site. The next 4 membrane-spanning stretches (helical) occupy residues alanine 1291–glycine 1311, cysteine 1333–isoleucine 1353, alanine 1355–valine 1375, and glycine 1385–glycine 1405. The interval alanine 1291 to glycine 1405 is HD3. Asparagine 1501 carries N-linked (GlcNAc...) asparagine; by host glycosylation. Residues asparagine 1577–aspartate 1614 form a disordered region. Residues glutamate 1600 to glycine 1612 are compositionally biased toward basic and acidic residues. Positions leucine 1716–aspartate 1883 constitute a NiRAN domain. In terms of domain architecture, RdRp catalytic spans lysine 2116 to serine 2251. The 68-residue stretch at serine 2371 to proline 2438 folds into the AV ZBD domain. Cysteine 2374, cysteine 2377, cysteine 2387, cysteine 2392, cysteine 2395, histidine 2399, histidine 2402, cysteine 2403, cysteine 2412, histidine 2414, cysteine 2423, and cysteine 2426 together coordinate Zn(2+). A (+)RNA virus helicase ATP-binding domain is found at proline 2496–leucine 2661. Glycine 2528–threonine 2535 serves as a coordination point for ATP. The region spanning arginine 2662–glutamate 2793 is the (+)RNA virus helicase C-terminal domain. In terms of domain architecture, AV-Nsp11N/CoV-Nsp15M spans lysine 2840–arginine 2930. The region spanning leucine 2932 to valine 3054 is the NendoU domain. Residues histidine 2963, histidine 2978, and lysine 3007 contribute to the active site.

It belongs to the arteriviridae polyprotein family. As to quaternary structure, nsp1 interacts with cellular transcription cofactor SND1/p100. Specific enzymatic cleavages in vivo by its own proteases yield mature proteins. There are two alternative pathways for processing. Either nsp4-5 is cleaved, which represents the major pathway or the nsp5-6 and nsp6-7 are processed, which represents the minor pathway. The major pathway occurs when nsp2 acts as a cofactor for nsp4.

The protein localises to the host nucleus. The protein resides in the host cytoplasm. It localises to the host membrane. Its subcellular location is the host perinuclear region. It carries out the reaction RNA(n) + a ribonucleoside 5'-triphosphate = RNA(n+1) + diphosphate. The enzyme catalyses ATP + H2O = ADP + phosphate + H(+). The catalysed reaction is Thiol-dependent hydrolysis of ester, thioester, amide, peptide and isopeptide bonds formed by the C-terminal Gly of ubiquitin (a 76-residue protein attached to proteins as an intracellular targeting signal).. It catalyses the reaction uridylyl-uridylyl-ribonucleotide-RNA = a 3'-end uridylyl-2',3'-cyclophospho-uridine-RNA + a 5'-end dephospho-ribonucleoside-RNA. Its function is as follows. The replicase polyprotein 1ab is a multifunctional protein: it contains the activities necessary for the transcription of negative stranded RNA, leader RNA, subgenomic mRNAs and progeny virion RNA as well as proteinases responsible for the cleavage of the polyprotein into functional products. In terms of biological role, nsp1 is essential for viral subgenomic mRNA synthesis. Functionally, nsp2 cysteine proteinase which cleaves the nsp2/nsp3 site in the polyprotein. Also displays deubiquitinating and deISGylase activities. The deubiquitinating activity cleaves both ubiquitinated and ISGylated products and may therefore regulate ubiquitin and ISG15 dependent host innate immunity. The 3C-like serine proteinase chain is responsible for the majority of cleavages as it cleaves the C-terminus of the polyprotein. Its function is as follows. The helicase chain, which contains a zinc finger structure, displays RNA and DNA duplex-unwinding activities with 5' to 3' polarity. In terms of biological role, plays a role in viral transcription/replication and prevents the simultaneous activation of host cell dsRNA sensors, such as MDA5/IFIH1, OAS, and PKR. Acts by degrading the 5'-polyuridines generated during replication of the poly(A) region of viral genomic and subgenomic RNAs. Catalyzes a two-step reaction in which a 2'3'-cyclic phosphate (2'3'-cP) is first generated by 2'-O transesterification, which is then hydrolyzed to a 3'-phosphate (3'-P). If not degraded, poly(U) RNA would hybridize with poly(A) RNA tails and activate host dsRNA sensors. In Equidae (horses), this protein is Replicase polyprotein 1ab (rep).